The primary structure comprises 309 residues: Mas-related G-protein coupled receptor member E (309 aa).

At 1–21 the chain is on the extracellular side; it reads MSLRVHTHSPSTQGDMAFNLT. A glycan (N-linked (GlcNAc...) asparagine) is linked at N19. A helical transmembrane segment spans residues 22-42; that stretch reads ILSLTELLSLGGLLGNGVALW. Residues 43–59 lie on the Cytoplasmic side of the membrane; sequence LLNQNVYRNPFSIYLLD. The chain crosses the membrane as a helical span at residues 60-80; that stretch reads VACADLIFLCCHMVAIIPELL. Residues 81–91 are Extracellular-facing; that stretch reads QDQLNFPEFVH. A helical transmembrane segment spans residues 92–112; it reads ISLIMLRFFCYIVGLSLLVAI. Over 113–132 the chain is Cytoplasmic; the sequence is STEQCLATLFPSGYLCRRPR. The chain crosses the membrane as a helical span at residues 133–153; the sequence is YLTTCVCAFIWVLCLLLDLLL. The Extracellular portion of the chain corresponds to 154–168; that stretch reads SGACTQFFGAPSYHL. A helical membrane pass occupies residues 169 to 189; that stretch reads CGMLWLVVAVLLAALCCTMCV. The Cytoplasmic segment spans residues 190–212; sequence TSLLLLLRVERGPERHQPRGFPT. Residues 213-233 form a helical membrane-spanning segment; the sequence is LVLLVILLFLFCGLPFGIFWL. Residues 234 to 247 are Extracellular-facing; that stretch reads SKNLSWHTPLYFYH. N236 is a glycosylation site (N-linked (GlcNAc...) asparagine). Residues 248 to 268 form a helical membrane-spanning segment; sequence FSFFMASVHSAAKPAIYFFLG. Residues 269-309 are Cytoplasmic-facing; it reads STPGQRFQEPLRLVLQRALGDEAELGAVREASQGGLVDMTV.

It belongs to the G-protein coupled receptor 1 family. Mas subfamily.

The protein resides in the cell membrane. Functionally, orphan receptor. May regulate nociceptor function and/or development, including the sensation or modulation of pain. In Rattus norvegicus (Rat), this protein is Mas-related G-protein coupled receptor member E (Mrgpre).